Reading from the N-terminus, the 249-residue chain is Chromosome-partitioning ATPase Soj (249 aa).

The ATP site is built by Lys-15, Gly-16, Gly-17, Val-18, Gly-19, Lys-20, Thr-21, Thr-22, Pro-207, and Asn-209. Position 17 (Gly-17) interacts with ADP. ADP is bound by residues Gly-19, Lys-20, Thr-21, Thr-22, Pro-207, and Asn-209. Thr-21 is a Mg(2+) binding site.

Belongs to the ParA family. As to quaternary structure, monomer in the absence of nucleotides or presence of ADP, in the presence of ATP is found in a monomer-dimer equilibrium. ATP-binding is required for DNA-binding. Probably interacts with Spo0J.

It carries out the reaction ATP + H2O = ADP + phosphate + H(+). With respect to regulation, ATPase activity is stimulated 10-fold in the presence of Spo0J and parS DNA (a plasmid centromere-like site or plasmid DNA itself). The first 20 residues of Spo0J stimulate its ATPase activity by 8%. Functionally, ATPase probably involved in chromosome partitioning. Cooperatively binds dsDNA, forming nucleoprotein filaments in a strictly ATP-dependent fashion. Can also bind ssDNA with lower affinity. The chain is Chromosome-partitioning ATPase Soj from Thermus thermophilus (strain ATCC BAA-163 / DSM 7039 / HB27).